The primary structure comprises 91 residues: Small ribosomal subunit protein uS19 (91 aa).

This sequence belongs to the universal ribosomal protein uS19 family.

Protein S19 forms a complex with S13 that binds strongly to the 16S ribosomal RNA. In Synechococcus elongatus (strain ATCC 33912 / PCC 7942 / FACHB-805) (Anacystis nidulans R2), this protein is Small ribosomal subunit protein uS19.